A 90-amino-acid chain; its full sequence is MSSTNETNQVLQRLNSLKIVETPKEQHEFGKRECYSLDSKKYSLVPATPSSSGHGKFQTELKKRRKNKLNRMYTYEADKNFIKARKSLNF.

A phosphothreonine mark is found at Thr22 and Thr48. The interval Pro46–Arg65 is disordered.

As to quaternary structure, component of the Frs-CycA-Cdk1 complex composed of Z600, CycA and Cdk1. Interacts preferentially with CycA (via C-terminus) but is also able to interact (via C-terminus) with CycE (via C-terminus).

It localises to the nucleus. Its function is as follows. Cell cycle regulator that is involved in modulating and adjusting cell proliferation according to the requirements of the developmental program. Interacts with mitotic Cdk1-cyclin complexes to inhibit mitotic entry at the G2/M transition. Likely to function by binding to the hydrophobic patch of cyclins to interfere with the interaction between the complex and certain Cdk1 substrates. At the mid-blastula transition, involved in the cell cycle arrest in G2 of cycle 14 by delaying mitosis and thus reducing cell proliferation allowing cell fate specification and morphogenesis to take place. Acts downstream or in parallel to the checkpoint regulator grp which is also required for the cell cycle pause at cycle 14. During gastrulation, delays mitosis in the ventral region of the embryonic mesoderm thus allowing invagination to be completed before cell division takes place. This is Protein Z600 from Drosophila melanogaster (Fruit fly).